A 1992-amino-acid polypeptide reads, in one-letter code: E3 ubiquitin-protein ligase TRIP12 (1992 aa).

Positions 1 to 10 (MSNRPNNNPG) are enriched in polar residues. Residues 1–398 (MSNRPNNNPG…SGESESDDSE (398 aa)) form a disordered region. The residue at position 2 (serine 2) is an N-acetylserine. Phosphoserine is present on serine 12. Polar residues predominate over residues 18-27 (RNTAGAQPQD). The span at 29 to 43 (SIGGRSCSSSSVVIV) shows a compositional bias: low complexity. Residues 48–70 (DPDRANTSEKQKTGQVPKKDNSR) are compositionally biased toward basic and acidic residues. Serine 77, serine 85, and serine 100 each carry phosphoserine. The segment covering 78-88 (PDYNRTNSPSS) has biased composition (polar residues). Polar residues predominate over residues 154–164 (SSCIKSASVSE). 2 stretches are compositionally biased toward low complexity: residues 175 to 188 (PTKL…SAKA) and 196 to 215 (SSSA…ASSA). Lysine 181 carries the N6-acetyllysine modification. Positions 280-290 (PGSSKSETSKP) are enriched in polar residues. Phosphoserine is present on residues serine 310 and serine 312. The span at 330 to 339 (GSCASASRRG) shows a compositional bias: low complexity. Residues 346-358 (GAAEARRQEKMAD) are compositionally biased toward basic and acidic residues. Over residues 362 to 371 (NQETVNSSAA) the composition is skewed to polar residues. One can recognise a WWE domain in the interval 749-836 (MLKKGNAQNT…DPELAKSFIK (88 aa)). Residues 938–1044 (SLLTSPPKAC…QSPKSSFLAS (107 aa)) are disordered. A Phosphoserine modification is found at serine 942. Residues 948–960 (TNGSGSLGSTPSV) show a composition bias toward polar residues. Residues 961 to 973 (NSGTATAATNASA) show a composition bias toward low complexity. Serine 991 and serine 997 each carry phosphoserine. Basic residues predominate over residues 1001–1014 (KRKRLPKRGSRRPK). Serine 1016 carries the phosphoserine modification. The segment covering 1017–1026 (PPRDDDKVDN) has biased composition (basic and acidic residues). Over residues 1029 to 1040 (KSPTTTQSPKSS) the composition is skewed to low complexity. 5 positions are modified to phosphoserine: serine 1030, serine 1317, serine 1322, serine 1329, and serine 1376. Phosphothreonine is present on threonine 1377. Disordered stretches follow at residues 1407–1434 (SNKD…AKKH) and 1568–1587 (TNPE…PRLD). Lysine 1425 is subject to N6-acetyllysine. Phosphoserine is present on serine 1427. The interval 1496–1570 (EIIPTSEFIN…AMQRLLDTNP (75 aa)) is K-box. Positions 1885–1992 (PDHGYTHDSR…REGQQSFHLS (108 aa)) constitute an HECT domain. The active-site Glycyl thioester intermediate is cysteine 1959.

Belongs to the UPL family. K-HECT subfamily. As to quaternary structure, interacts with MYC; leading to disrupt interaction with isoform p19ARF/ARF of CDKN2A. Interacts with TRADD; leading to disrupt interaction with isoform p19ARF/ARF of CDKN2A. Interacts with SMARCC1; leading to disrupt interaction with SMARCE1.

The protein resides in the nucleus. It is found in the nucleoplasm. It catalyses the reaction S-ubiquitinyl-[E2 ubiquitin-conjugating enzyme]-L-cysteine + [acceptor protein]-L-lysine = [E2 ubiquitin-conjugating enzyme]-L-cysteine + N(6)-ubiquitinyl-[acceptor protein]-L-lysine.. Its pathway is protein modification; protein ubiquitination. E3 ubiquitin-protein ligase involved in ubiquitin fusion degradation (UFD) pathway and regulation of DNA repair. Part of the ubiquitin fusion degradation (UFD) pathway, a process that mediates ubiquitination of protein at their N-terminus, regardless of the presence of lysine residues in target proteins. Acts as a key regulator of DNA damage response by acting as a suppressor of RNF168, an E3 ubiquitin-protein ligase that promotes accumulation of 'Lys-63'-linked histone H2A and H2AX at DNA damage sites, thereby acting as a guard against excessive spreading of ubiquitinated chromatin at damaged chromosomes. In normal cells, mediates ubiquitination and degradation of isoform p19ARF/ARF of CDKN2A, a lysine-less tumor suppressor required for p53/TP53 activation under oncogenic stress. In cancer cells, however, isoform p19ARF/ARF and TRIP12 are located in different cell compartments, preventing isoform p19ARF/ARF ubiquitination and degradation. Does not mediate ubiquitination of isoform p16-INK4a of CDKN2A. Also catalyzes ubiquitination of NAE1 and SMARCE1, leading to their degradation. Ubiquitination and degradation of target proteins is regulated by interaction with proteins such as MYC, TRADD or SMARCC1, which disrupt the interaction between TRIP12 and target proteins. Mediates ubiquitination of ASXL1: following binding to N(6)-methyladenosine methylated DNA, ASXL1 is ubiquitinated by TRIP12, leading to its degradation and subsequent inactivation of the PR-DUB complex. The chain is E3 ubiquitin-protein ligase TRIP12 (TRIP12) from Bos taurus (Bovine).